A 105-amino-acid chain; its full sequence is Large ribosomal subunit protein uL24 (105 aa).

The protein belongs to the universal ribosomal protein uL24 family. Part of the 50S ribosomal subunit.

Functionally, one of two assembly initiator proteins, it binds directly to the 5'-end of the 23S rRNA, where it nucleates assembly of the 50S subunit. In terms of biological role, one of the proteins that surrounds the polypeptide exit tunnel on the outside of the subunit. The sequence is that of Large ribosomal subunit protein uL24 from Thermotoga petrophila (strain ATCC BAA-488 / DSM 13995 / JCM 10881 / RKU-1).